The following is a 310-amino-acid chain: MDGVIVYCLNALVKHGEEINHIKNDFMIKPCCEKVKNVHIGGQSKNNTVIADLPYMDNAVSDVCNSLYKKNVSRISRFANLIKIDDDDKTPTGVYNYFKPKDAIPVIISIGKDRDVCELLISSDKACACIELNSYKVAILPMDVSFFTKGNASLIILLFDFSIDAAPLLRSVTDNNVIISRHQRLHDELPSSNWFKFYISIKSDYCSILYMVVDGSVMHAIADNRTYANISKNILDNTTINDECRCCYFEPQIRILDRDEMLNGSSCDMNRHCIMMNLPDVGEFGSSMLGKYEPDMIKIALSVAGIWKVL.

This sequence belongs to the orthopoxvirus OPG181 family.

The sequence is that of Protein OPG181 (OPG181) from Homo sapiens (Human).